Here is a 206-residue protein sequence, read N- to C-terminus: Outer-membrane lipoprotein LolB (206 aa).

The first 21 residues, 1–21 (MHERNYAVFRLLPLASLLLAA), serve as a signal peptide directing secretion. A lipid anchor (N-palmitoyl cysteine) is attached at cysteine 22. The S-diacylglycerol cysteine moiety is linked to residue cysteine 22.

This sequence belongs to the LolB family. As to quaternary structure, monomer.

The protein resides in the cell outer membrane. Plays a critical role in the incorporation of lipoproteins in the outer membrane after they are released by the LolA protein. The protein is Outer-membrane lipoprotein LolB of Sodalis glossinidius (strain morsitans).